The following is a 122-amino-acid chain: MIQQESQLKVADNTGAKKVKCFKVLGGSRRRYATVGDVIVCSVRDVEPNSSIKKGDVIKAVIVRTRRHITRKDGSTLKFDTNSCVIIDDKGNPKGTRIFGPVAREIRDRGFIKISSLAPEVI.

This sequence belongs to the universal ribosomal protein uL14 family. In terms of assembly, part of the 50S ribosomal subunit. Forms a cluster with proteins L3 and L19. In the 70S ribosome, L14 and L19 interact and together make contacts with the 16S rRNA in bridges B5 and B8.

Functionally, binds to 23S rRNA. Forms part of two intersubunit bridges in the 70S ribosome. This chain is Large ribosomal subunit protein uL14, found in Chlamydia pneumoniae (Chlamydophila pneumoniae).